The chain runs to 1334 residues: Nck-associated protein 5-like (1334 aa).

Disordered stretches follow at residues 1 to 28 (MSEA…MEPG), 115 to 146 (LPQI…APLP), 210 to 234 (TPWR…GPPQ), 266 to 316 (GEED…SPDT), and 349 to 711 (PLNG…MVPS). The segment at 1-139 (MSEAMDQPAG…PASPSLSSTE (139 aa)) is mediates interaction with CDK5RAP2 and is required for homodimerization and microtubule bundle formation. Positions 28–106 (GTCQELLHRL…NQMLSALFQQ (79 aa)) form a coiled coil. Positions 122–132 (PLQPPSEPPAS) are enriched in pro residues. A compositionally biased stretch (polar residues) spans 358–372 (GQSSSPDQAPPQLSK). Phosphoserine; by CDK1 is present on residues Ser-440, Ser-451, Ser-470, and Ser-477. Positions 468-481 (SPSPGGPQLSPQLP) are enriched in low complexity. The short motif at 484–487 (SRIP) is the (S/T)X(I/L)P motif 1 element. A phosphoserine mark is found at Ser-493, Ser-496, and Ser-498. The segment covering 519–547 (LPTSPSPCYTTPDSTQLRPPQSALSTTLS) has biased composition (polar residues). A phosphoserine; by CDK1 mark is found at Ser-571 and Ser-577. Over residues 638 to 649 (PGNSSKKPSQGS) the composition is skewed to polar residues. Thr-659 is subject to Phosphothreonine. The mediates interaction with beta-tubulin and is required for microtubule bundle formation stretch occupies residues 750 to 1146 (RVYSSHSMGA…SGTPSKNLPK (397 aa)). Phosphoserine; by CDK1 is present on Ser-767. Positions 782–884 (LAGALCPQVP…EGLAPHSAIE (103 aa)) are disordered. The span at 810–825 (SPHSSPTKLPSKSPTK) shows a compositional bias: low complexity. The (S/T)X(I/L)P motif 2 motif lies at 816 to 819 (TKLP). A (S/T)X(I/L)P motif 3; required for interaction with MAPRE1 motif is present at residues 926–929 (SKLP). 3 disordered regions span residues 931–953 (LNRR…LRRE), 986–1015 (KAYL…QGQL), and 1030–1183 (LNRV…VPGI). The segment covering 933 to 942 (RRTEATKNKE) has biased composition (basic and acidic residues). Residues 956–994 (MEARKLEAESLNISKLMAKAEDLRRALEEEKAYLSSRAR) adopt a coiled-coil conformation. Basic and acidic residues predominate over residues 1033–1050 (VDGKELPSKSWREPKPEY). The span at 1079 to 1090 (GCGKPPGKPSSE) shows a compositional bias: low complexity. The span at 1110-1122 (SHFTACGSLTRTL) shows a compositional bias: polar residues. A compositionally biased stretch (pro residues) spans 1152–1167 (LDPPPGVPPARPPPLT). The residue at position 1194 (Ser-1194) is a Phosphoserine. Residues 1197 to 1206 (AFPALLPAAP) show a composition bias toward low complexity. The disordered stretch occupies residues 1197-1334 (AFPALLPAAP…DSLSSCGSQG (138 aa)). Polar residues predominate over residues 1235–1247 (TFPNTRAAGSSSD). Over residues 1313–1334 (LETSESLSDSLYDSLSSCGSQG) the composition is skewed to low complexity.

As to quaternary structure, homodimer. Interacts with CDK5RAP2. Interacts with MAPRE1. Interacts with beta-tubulin. Post-translationally, CDK1/Cyclin B-dependent phosphorylation mediates its dissociation from centrosomes during mitosis.

The protein resides in the cytoplasm. Its subcellular location is the cytoskeleton. It localises to the microtubule organizing center. It is found in the centrosome. Regulates microtubule organization and stabilization. Promotes microtubule growth and bundling formation and stabilizes microtubules by increasing intense acetylation of microtubules. Both tubulin-binding and homodimer formation are required for NCKAP5L-mediated microtubule bundle formation. This chain is Nck-associated protein 5-like, found in Homo sapiens (Human).